We begin with the raw amino-acid sequence, 37 residues long: Large ribosomal subunit protein bL36c (37 aa).

It belongs to the bacterial ribosomal protein bL36 family.

It localises to the plastid. The polypeptide is Large ribosomal subunit protein bL36c (rpl36) (Epifagus virginiana (Beechdrops)).